Consider the following 373-residue polypeptide: Packaging protein 3 (373 aa).

The interval 1 to 32 (MHPVLRQMRPQPRATTASAAVALSGSGEQEEP) is disordered. The interval 1 to 150 (MHPVLRQMRP…VTEERNFQKS (150 aa)) is interaction with packaging protein 1. Residues Ser52 and Ser334 each carry the phosphoserine; by host modification.

Belongs to the adenoviridae packaging protein 3 family. As to quaternary structure, part of the genome packaging complex composed of packaging proteins 1, 2 and 3; this complex specifically binds to the packaging sequence on the left end of viral genomic DNA and performs packaging of the viral genome. Interacts with hexon-linking protein IIIa; this interaction is required to promote correct genome packaging. In terms of processing, cleaved at different sites by the viral protease during virion maturation.

It localises to the host nucleus. Its function is as follows. Involved in viral genome packaging through its interaction with packaging proteins 1 and 2. After proteolytic cleavage by adenovirus protease, L1 52/55k protein is removed from the capsid during viral maturation. In Homo sapiens (Human), this protein is Packaging protein 3.